The sequence spans 280 residues: 4-diphosphocytidyl-2-C-methyl-D-erythritol kinase (280 aa).

Lys-8 is a catalytic residue. Pro-91–Ser-101 contributes to the ATP binding site. Asp-133 is a catalytic residue.

Belongs to the GHMP kinase family. IspE subfamily.

It carries out the reaction 4-CDP-2-C-methyl-D-erythritol + ATP = 4-CDP-2-C-methyl-D-erythritol 2-phosphate + ADP + H(+). Its pathway is isoprenoid biosynthesis; isopentenyl diphosphate biosynthesis via DXP pathway; isopentenyl diphosphate from 1-deoxy-D-xylulose 5-phosphate: step 3/6. Functionally, catalyzes the phosphorylation of the position 2 hydroxy group of 4-diphosphocytidyl-2C-methyl-D-erythritol. The chain is 4-diphosphocytidyl-2-C-methyl-D-erythritol kinase from Clostridium kluyveri (strain NBRC 12016).